The following is a 211-amino-acid chain: Small ribosomal subunit protein uS5 (211 aa).

The S5 DRBM domain maps to 50–113 (LEDEVLDINM…DNAKINITRI (64 aa)).

It belongs to the universal ribosomal protein uS5 family. In terms of assembly, part of the 30S ribosomal subunit. Contacts protein S4.

With S4 and S12 plays an important role in translational accuracy. In Methanococcoides burtonii (strain DSM 6242 / NBRC 107633 / OCM 468 / ACE-M), this protein is Small ribosomal subunit protein uS5.